The primary structure comprises 121 residues: Protein TusC (121 aa).

Belongs to the DsrF/TusC family. As to quaternary structure, heterohexamer, formed by a dimer of trimers. The hexameric TusBCD complex contains 2 copies each of TusB, TusC and TusD. The TusBCD complex interacts with TusE.

Its subcellular location is the cytoplasm. In terms of biological role, part of a sulfur-relay system required for 2-thiolation of 5-methylaminomethyl-2-thiouridine (mnm(5)s(2)U) at tRNA wobble positions. The sequence is that of Protein TusC from Yersinia enterocolitica serotype O:8 / biotype 1B (strain NCTC 13174 / 8081).